A 908-amino-acid chain; its full sequence is Auxin response factor 6 (908 aa).

The segment at 1 to 21 (MKLSPSAGGVSDQPPSPPEVA) is disordered. Positions 134–236 (FCKTLTASDT…QLLLGIRRAN (103 aa)) form a DNA-binding region, TF-B3. Residues 525 to 556 (NEQKPQLQPQQQQQESHQQQPQHQQMQQQKHL) form a disordered region. Residues 526-556 (EQKPQLQPQQQQQESHQQQPQHQQMQQQKHL) show a composition bias toward low complexity. The 85-residue stretch at 777–861 (ATFVKVYKSG…SCIKILSPQE (85 aa)) folds into the PB1 domain.

It belongs to the ARF family. As to quaternary structure, homodimers and heterodimers.

It localises to the nucleus. Auxin response factors (ARFs) are transcriptional factors that bind specifically to the DNA sequence 5'-TGTCTC-3' found in the auxin-responsive promoter elements (AuxREs). This Oryza sativa subsp. indica (Rice) protein is Auxin response factor 6 (ARF6).